The sequence spans 148 residues: UPF0756 membrane protein YeaL (148 aa).

4 consecutive transmembrane segments (helical) span residues 14-34 (ALGF…LIIV), 51-71 (LSIG…SGTL), 86-106 (LVAI…VTLM), and 121-141 (VLGV…AGLV).

It belongs to the UPF0756 family.

The protein localises to the cell membrane. The chain is UPF0756 membrane protein YeaL from Shigella dysenteriae serotype 1 (strain Sd197).